A 637-amino-acid polypeptide reads, in one-letter code: Penicillin-binding protein 1A (637 aa).

The transglycosylase stretch occupies residues 62 to 224; the sequence is LIADLGSERR…NQYDPYSHPE (163 aa). The Proton donor; for transglycosylase activity role is filled by Glu91. The segment at 298–612 is transpeptidase; that stretch reads EVYTNVDSKV…RLTPIVGDGF (315 aa). Catalysis depends on Ser371, which acts as the Acyl-ester intermediate; for transpeptidase activity.

The protein in the N-terminal section; belongs to the glycosyltransferase 51 family. This sequence in the C-terminal section; belongs to the transpeptidase family.

It is found in the secreted. The enzyme catalyses [GlcNAc-(1-&gt;4)-Mur2Ac(oyl-L-Ala-gamma-D-Glu-L-Lys-D-Ala-D-Ala)](n)-di-trans,octa-cis-undecaprenyl diphosphate + beta-D-GlcNAc-(1-&gt;4)-Mur2Ac(oyl-L-Ala-gamma-D-Glu-L-Lys-D-Ala-D-Ala)-di-trans,octa-cis-undecaprenyl diphosphate = [GlcNAc-(1-&gt;4)-Mur2Ac(oyl-L-Ala-gamma-D-Glu-L-Lys-D-Ala-D-Ala)](n+1)-di-trans,octa-cis-undecaprenyl diphosphate + di-trans,octa-cis-undecaprenyl diphosphate + H(+). It catalyses the reaction Preferential cleavage: (Ac)2-L-Lys-D-Ala-|-D-Ala. Also transpeptidation of peptidyl-alanyl moieties that are N-acyl substituents of D-alanine.. It participates in cell wall biogenesis; peptidoglycan biosynthesis. In terms of biological role, cell wall formation. The sequence is that of Penicillin-binding protein 1A (ponA) from Streptococcus oralis.